Consider the following 256-residue polypeptide: Acetyl-coenzyme A carboxylase carboxyl transferase subunit alpha (256 aa).

The 236-residue stretch at 1–236 folds into the CoA carboxyltransferase C-terminal domain; that stretch reads MTDVARILKE…KSHLIDEITQ (236 aa).

It belongs to the AccA family. Acetyl-CoA carboxylase is a heterohexamer composed of biotin carboxyl carrier protein (AccB), biotin carboxylase (AccC) and two subunits each of ACCase subunit alpha (AccA) and ACCase subunit beta (AccD).

The protein localises to the cytoplasm. The enzyme catalyses N(6)-carboxybiotinyl-L-lysyl-[protein] + acetyl-CoA = N(6)-biotinyl-L-lysyl-[protein] + malonyl-CoA. Its pathway is lipid metabolism; malonyl-CoA biosynthesis; malonyl-CoA from acetyl-CoA: step 1/1. Component of the acetyl coenzyme A carboxylase (ACC) complex. First, biotin carboxylase catalyzes the carboxylation of biotin on its carrier protein (BCCP) and then the CO(2) group is transferred by the carboxyltransferase to acetyl-CoA to form malonyl-CoA. In Streptococcus equi subsp. equi (strain 4047), this protein is Acetyl-coenzyme A carboxylase carboxyl transferase subunit alpha.